A 147-amino-acid polypeptide reads, in one-letter code: MQKQARKQITLYSDGSSLGNPGPGGYGGILEYKGSRKEYFGGEEETTNNRMELRGVIEGLKLLKEPCDVEVVSDSSYVVKAINEWLESWIRRDFKKVKNVDLWKAYIEAAAPHHVHGTWVRGHDGHPENERCDELARNEAERIKASL.

The 137-residue stretch at 5 to 141 (ARKQITLYSD…CDELARNEAE (137 aa)) folds into the RNase H type-1 domain. The Mg(2+) site is built by D14, E52, D74, and D133.

The protein belongs to the RNase H family. In terms of assembly, monomer. Requires Mg(2+) as cofactor.

It is found in the cytoplasm. It carries out the reaction Endonucleolytic cleavage to 5'-phosphomonoester.. Its function is as follows. Endonuclease that specifically degrades the RNA of RNA-DNA hybrids. The chain is Ribonuclease H from Sulfurovum sp. (strain NBC37-1).